The primary structure comprises 405 residues: Cysteine desulfurase IscS (405 aa).

Residue Asn156 coordinates pyridoxal 5'-phosphate. N6-(pyridoxal phosphate)lysine is present on Lys207. Cys329 (cysteine persulfide intermediate) is an active-site residue. Cys329 provides a ligand contact to [2Fe-2S] cluster.

Belongs to the class-V pyridoxal-phosphate-dependent aminotransferase family. NifS/IscS subfamily. Homodimer. Forms a heterotetramer with IscU, interacts with other sulfur acceptors. Pyridoxal 5'-phosphate is required as a cofactor.

The protein localises to the cytoplasm. The catalysed reaction is (sulfur carrier)-H + L-cysteine = (sulfur carrier)-SH + L-alanine. Its pathway is cofactor biosynthesis; iron-sulfur cluster biosynthesis. In terms of biological role, master enzyme that delivers sulfur to a number of partners involved in Fe-S cluster assembly, tRNA modification or cofactor biosynthesis. Catalyzes the removal of elemental sulfur atoms from cysteine to produce alanine. Functions as a sulfur delivery protein for Fe-S cluster synthesis onto IscU, an Fe-S scaffold assembly protein, as well as other S acceptor proteins. This chain is Cysteine desulfurase IscS, found in Dechloromonas aromatica (strain RCB).